A 393-amino-acid polypeptide reads, in one-letter code: CCA-adding enzyme (393 aa).

ATP-binding residues include Gly-27 and Arg-30. CTP contacts are provided by Gly-27 and Arg-30. Positions 40 and 42 each coordinate Mg(2+). ATP-binding residues include Arg-111, Asp-154, Arg-157, Arg-160, and Arg-163. CTP is bound by residues Arg-111, Asp-154, Arg-157, Arg-160, and Arg-163.

This sequence belongs to the tRNA nucleotidyltransferase/poly(A) polymerase family. Bacterial CCA-adding enzyme type 3 subfamily. In terms of assembly, homodimer. It depends on Mg(2+) as a cofactor.

It catalyses the reaction a tRNA precursor + 2 CTP + ATP = a tRNA with a 3' CCA end + 3 diphosphate. It carries out the reaction a tRNA with a 3' CCA end + 2 CTP + ATP = a tRNA with a 3' CCACCA end + 3 diphosphate. Functionally, catalyzes the addition and repair of the essential 3'-terminal CCA sequence in tRNAs without using a nucleic acid template. Adds these three nucleotides in the order of C, C, and A to the tRNA nucleotide-73, using CTP and ATP as substrates and producing inorganic pyrophosphate. tRNA 3'-terminal CCA addition is required both for tRNA processing and repair. Also involved in tRNA surveillance by mediating tandem CCA addition to generate a CCACCA at the 3' terminus of unstable tRNAs. While stable tRNAs receive only 3'-terminal CCA, unstable tRNAs are marked with CCACCA and rapidly degraded. The protein is CCA-adding enzyme of Listeria innocua serovar 6a (strain ATCC BAA-680 / CLIP 11262).